Reading from the N-terminus, the 115-residue chain is Large ribosomal subunit protein bL20 (115 aa).

This sequence belongs to the bacterial ribosomal protein bL20 family.

Functionally, binds directly to 23S ribosomal RNA and is necessary for the in vitro assembly process of the 50S ribosomal subunit. It is not involved in the protein synthesizing functions of that subunit. The sequence is that of Large ribosomal subunit protein bL20 from Borrelia duttonii (strain Ly).